The primary structure comprises 946 residues: MPASPLPALSPPASPRRNTSGASALGSRKADIPPDAIRGFATVGSLVRSEHFAQHFDDDIAGKDQEQSRKKSPEDVGNIAATKKKPGKRAATTSTADGEAKPKPKPRARKPKAADEEAVIIDPELRLPAAKVSPFFAAEGAPAAIEPSDEPVVDVPKLTKAGKPRKPRAKKENVGGEEAVPKPKRTRVTKPKAAKAKAGGKSQEEACVESAHFRKSEDTGDETVAGVLATRKSATTENVGSGEASIWDVPQSPKPKKKRAPKKPPPDPVINNLELDEAVSRRRDWTPPRDTAIPSPFTDSVGKENKQIEPDADNGGFTHMISNFAYAQALPAQVASTVADSATGTMAATKRRRIELLDVPGNQTTSRNSSPEKGKAPKKKPRTITDIATEQYQHRAAQLDQSDVASDFFQSHTAVTKVPLNDASLPNGDAPTKKPPRKRSTSKPASEKEKVGSKARSKKASTKAAAKPKHIAEKLLSPGSALMRMNKQDILFGTSSQLALEEPPTLVRQLQHALKESEVEADLSSNGMIAPPPRWPKLDKVVGKRSLWDASSRDVEGGMLEHMEDVYIPEFDRTQDFPLLMDGTNDQPDGAPPSFADIDDFEPAPPVIISSDGPTPPPTTSRTSQRKANDEPDHVMEGPVFEDIDDFDFQPPPSNQNVEFQDSFADDDEILHTSVQSSTHPPPRLRPPATSDPMNGSSKKPRGCPAKSQSAIATSGSPAVAKEPKRTKGKEVKSAPAPPTTPAKGSGRFIDIDEILDSDDEALQALSPTPPRIHNFENSQPLPLYSVSPTRAKKPKADSSVDSKIVPVHIIPTAHLEWLNLKNSIFPSITSHIRSLPSTRDPSKPSWHEKILMYDPIVLEDFTAYLNAKTSLRTWRRATKIQSKAWNKAQKSIGAQEIGVVEGGGNVLAVEKELEAWQVQSWCESMSVCCIWGEGRGKGGVRKGFY.

The span at 1-14 shows a compositional bias: pro residues; the sequence is MPASPLPALSPPAS. 7 disordered regions span residues 1–35, 54–119, 147–318, 339–399, 416–471, 577–748, and 765–799; these read MPASPLPALSPPASPRRNTSGASALGSRKADIPPD, QHFD…EEAV, PSDE…GGFT, ADSA…AAQL, TKVP…PKHI, FPLL…GSGR, and ALSPTPPRIHNFENSQPLPLYSVSPTRAKKPKADS. A compositionally biased stretch (basic and acidic residues) spans 54-74; sequence QHFDDDIAGKDQEQSRKKSPE. 2 stretches are compositionally biased toward basic residues: residues 160 to 169 and 182 to 195; these read KAGKPRKPRA and KPKRTRVTKPKAAK. The span at 278-287 shows a compositional bias: basic and acidic residues; it reads AVSRRRDWTP. Positions 453-469 are enriched in basic residues; sequence SKARSKKASTKAAAKPK. Residues 627 to 636 are compositionally biased toward basic and acidic residues; it reads KANDEPDHVM. Polar residues predominate over residues 707 to 717; the sequence is KSQSAIATSGS. A compositionally biased stretch (basic and acidic residues) spans 722-733; it reads KEPKRTKGKEVK.

This sequence belongs to the SLX4 family. In terms of assembly, forms a heterodimer with SLX1. Post-translationally, phosphorylated in response to DNA damage.

The protein localises to the nucleus. In terms of biological role, regulatory subunit of the SLX1-SLX4 structure-specific endonuclease that resolves DNA secondary structures generated during DNA repair and recombination. Has endonuclease activity towards branched DNA substrates, introducing single-strand cuts in duplex DNA close to junctions with ss-DNA. This chain is Structure-specific endonuclease subunit SLX4, found in Phaeosphaeria nodorum (strain SN15 / ATCC MYA-4574 / FGSC 10173) (Glume blotch fungus).